Consider the following 615-residue polypeptide: Glutamine--fructose-6-phosphate aminotransferase [isomerizing] (615 aa).

Cysteine 2 serves as the catalytic Nucleophile; for GATase activity. The region spanning 2-220 (CGIVGYVGPQ…QDQVVELRRD (219 aa)) is the Glutamine amidotransferase type-2 domain. 2 consecutive SIS domains span residues 287-427 (IPPG…VRGT) and 460-605 (LARS…VDQP). Lysine 610 functions as the For Fru-6P isomerization activity in the catalytic mechanism.

In terms of assembly, homodimer.

The protein localises to the cytoplasm. It carries out the reaction D-fructose 6-phosphate + L-glutamine = D-glucosamine 6-phosphate + L-glutamate. Catalyzes the first step in hexosamine metabolism, converting fructose-6P into glucosamine-6P using glutamine as a nitrogen source. In Streptomyces coelicolor (strain ATCC BAA-471 / A3(2) / M145), this protein is Glutamine--fructose-6-phosphate aminotransferase [isomerizing].